Consider the following 147-residue polypeptide: Transcription antitermination protein NusB (147 aa).

This sequence belongs to the NusB family.

Its function is as follows. Involved in transcription antitermination. Required for transcription of ribosomal RNA (rRNA) genes. Binds specifically to the boxA antiterminator sequence of the ribosomal RNA (rrn) operons. The polypeptide is Transcription antitermination protein NusB (Legionella pneumophila (strain Paris)).